The chain runs to 590 residues: Muscarinic acetylcholine receptor M3 (590 aa).

The Extracellular portion of the chain corresponds to 1 to 67 (MTLHNNNTTS…DPLGGHTIWQ (67 aa)). Asparagine 6, asparagine 7, asparagine 15, asparagine 41, asparagine 48, and asparagine 53 each carry an N-linked (GlcNAc...) asparagine glycan. The chain crosses the membrane as a helical span at residues 68 to 91 (VVFIAFLTGILALVTIIGNILVIV). Residues 92–104 (AFKVNKQLKTVNN) are Cytoplasmic-facing. The helical transmembrane segment at 105–130 (YFLLSLACADLIIGVISMNLFTTYII) threads the bilayer. The Extracellular segment spans residues 131–142 (MNRWALGNLACD). A disulfide bridge connects residues cysteine 141 and cysteine 221. A helical membrane pass occupies residues 143–164 (LWLSIDYVASNASVMNLLVISF). Residues 165-184 (DRYFSITRPLTYRAKRTTKR) lie on the Cytoplasmic side of the membrane. Residues 185–206 (AGVMIGLAWVISFILWAPAILF) form a helical membrane-spanning segment. The Extracellular segment spans residues 207 to 229 (WQYFVGKRTVPPGECFIQFLSEP). The helical transmembrane segment at 230–252 (TITFGTAIAAFYMPVTIMTILYW) threads the bilayer. The Cytoplasmic portion of the chain corresponds to 253-491 (RIYKETEKRT…SLIKEKKAAQ (239 aa)). Positions 275-281 (AEAENFV) match the Basolateral sorting signal motif. The interval 324-357 (AEQMDQDHSSSDSWNNNDAAASLENSASSDEEDI) is disordered. Positions 334–345 (SDSWNNNDAAAS) are enriched in low complexity. Phosphoserine is present on serine 385. Residues 492–514 (TLSAILLAFIITWTPYNIMVLVN) traverse the membrane as a helical segment. At 515–526 (TFCDSCIPKTYW) the chain is on the extracellular side. Residues cysteine 517 and cysteine 520 are joined by a disulfide bond. The helical transmembrane segment at 527 to 546 (NLGYWLCYINSTVNPVCYAL) threads the bilayer. Residues 547-590 (CNKTFRTTFKMLLLCQCDKRKRRKQQYQQRQSVIFHKRVPEQAL) lie on the Cytoplasmic side of the membrane.

It belongs to the G-protein coupled receptor 1 family. Muscarinic acetylcholine receptor subfamily. CHRM3 sub-subfamily. Homodimer; the dimers can form tetramers. Interacts with NALCN. Interacts with TMEM147.

The protein resides in the cell membrane. It is found in the postsynaptic cell membrane. The protein localises to the basolateral cell membrane. Its subcellular location is the endoplasmic reticulum membrane. In terms of biological role, the muscarinic acetylcholine receptor mediates various cellular responses, including inhibition of adenylate cyclase, breakdown of phosphoinositides and modulation of potassium channels through the action of G proteins. Primary transducing effect is Pi turnover. This Sus scrofa (Pig) protein is Muscarinic acetylcholine receptor M3 (CHRM3).